We begin with the raw amino-acid sequence, 1265 residues long: Methionine synthase (1265 aa).

The 320-residue stretch at 19-338 folds into the Hcy-binding domain; it reads RDEINAILQK…DHIREIAEAV (320 aa). Residues cysteine 260, cysteine 323, and cysteine 324 each coordinate Zn(2+). In terms of domain architecture, Pterin-binding spans 371-632; sequence FVNIGERCNV…IHKELLQLCE (262 aa). Residues 382 to 384, aspartate 449, asparagine 470, aspartate 537, asparagine 579, arginine 585, and arginine 591 contribute to the (6S)-5,6,7,8-tetrahydrofolate site; that span reads GSR. One can recognise a B12-binding N-terminal domain in the interval 662 to 759; it reads QTDEWRNGPV…FMEKEREETR (98 aa). Methylcob(III)alamin is bound by residues glutamate 709, 782 to 786, histidine 785, serine 830, threonine 834, and alanine 886; that span reads GDVHD. In terms of domain architecture, B12-binding spans 772–907; that stretch reads QGTIVLATVK…DENLKDEYFE (136 aa). In terms of domain architecture, AdoMet activation spans 923–1265; the sequence is SLKERRYLPL…LGPILGYDTD (343 aa). S-adenosyl-L-methionine is bound by residues aspartate 974, arginine 1172, and 1227–1228; that span reads YF. Threonine 1264 bears the Phosphothreonine mark.

The protein belongs to the vitamin-B12 dependent methionine synthase family. In terms of assembly, monomer. Dimer. Forms a multiprotein complex with MMACHC, MMADHC and MTRR. Methylcob(III)alamin is required as a cofactor. It depends on Zn(2+) as a cofactor. In terms of tissue distribution, widely expressed. Expressed at the highest levels in pancreas, heart, brain, skeletal muscle and placenta. Expressed at lower levels in lung, liver and kidney.

The protein localises to the cytoplasm. It carries out the reaction (6S)-5-methyl-5,6,7,8-tetrahydrofolate + L-homocysteine = (6S)-5,6,7,8-tetrahydrofolate + L-methionine. It functions in the pathway amino-acid biosynthesis; L-methionine biosynthesis via de novo pathway; L-methionine from L-homocysteine (MetH route): step 1/1. Functionally, catalyzes the transfer of a methyl group from methylcob(III)alamin (MeCbl) to homocysteine, yielding enzyme-bound cob(I)alamin and methionine in the cytosol. MeCbl is an active form of cobalamin (vitamin B12) used as a cofactor for methionine biosynthesis. Cob(I)alamin form is regenerated to MeCbl by a transfer of a methyl group from 5-methyltetrahydrofolate. The processing of cobalamin in the cytosol occurs in a multiprotein complex composed of at least MMACHC, MMADHC, MTRR (methionine synthase reductase) and MTR which may contribute to shuttle safely and efficiently cobalamin towards MTR in order to produce methionine. This Homo sapiens (Human) protein is Methionine synthase.